Reading from the N-terminus, the 292-residue chain is N-acetylneuraminate lyase (292 aa).

Aceneuramate-binding residues include serine 47 and threonine 48. Tyrosine 136 serves as the catalytic Proton donor. Lysine 164 functions as the Schiff-base intermediate with substrate in the catalytic mechanism. Residues threonine 166, glycine 188, aspartate 190, glutamate 191, and serine 207 each coordinate aceneuramate.

Belongs to the DapA family. NanA subfamily. In terms of assembly, homotetramer.

Its subcellular location is the cytoplasm. The catalysed reaction is aceneuramate = aldehydo-N-acetyl-D-mannosamine + pyruvate. It participates in amino-sugar metabolism; N-acetylneuraminate degradation; D-fructose 6-phosphate from N-acetylneuraminate: step 1/5. Functionally, catalyzes the reversible aldol cleavage of N-acetylneuraminic acid (sialic acid; Neu5Ac) to form pyruvate and N-acetylmannosamine (ManNAc) via a Schiff base intermediate. This is N-acetylneuraminate lyase from Actinobacillus pleuropneumoniae serotype 5b (strain L20).